The chain runs to 122 residues: Large ribosomal subunit protein uL14 (122 aa).

It belongs to the universal ribosomal protein uL14 family. In terms of assembly, part of the 50S ribosomal subunit. Forms a cluster with proteins L3 and L19. In the 70S ribosome, L14 and L19 interact and together make contacts with the 16S rRNA in bridges B5 and B8.

Its function is as follows. Binds to 23S rRNA. Forms part of two intersubunit bridges in the 70S ribosome. The protein is Large ribosomal subunit protein uL14 of Mycoplasma genitalium (strain ATCC 33530 / DSM 19775 / NCTC 10195 / G37) (Mycoplasmoides genitalium).